The sequence spans 271 residues: Putative phosphoenolpyruvate synthase regulatory protein (271 aa).

151-158 contributes to the ADP binding site; that stretch reads GVSRSGKT.

Belongs to the pyruvate, phosphate/water dikinase regulatory protein family. PSRP subfamily.

The catalysed reaction is [pyruvate, water dikinase] + ADP = [pyruvate, water dikinase]-phosphate + AMP + H(+). It catalyses the reaction [pyruvate, water dikinase]-phosphate + phosphate + H(+) = [pyruvate, water dikinase] + diphosphate. In terms of biological role, bifunctional serine/threonine kinase and phosphorylase involved in the regulation of the phosphoenolpyruvate synthase (PEPS) by catalyzing its phosphorylation/dephosphorylation. In Burkholderia cenocepacia (strain ATCC BAA-245 / DSM 16553 / LMG 16656 / NCTC 13227 / J2315 / CF5610) (Burkholderia cepacia (strain J2315)), this protein is Putative phosphoenolpyruvate synthase regulatory protein.